The primary structure comprises 437 residues: UDP-N-acetylmuramate--L-alanine ligase (437 aa).

Residue 108–114 participates in ATP binding; that stretch reads GAHGKTS.

It belongs to the MurCDEF family.

The protein resides in the cytoplasm. The catalysed reaction is UDP-N-acetyl-alpha-D-muramate + L-alanine + ATP = UDP-N-acetyl-alpha-D-muramoyl-L-alanine + ADP + phosphate + H(+). Its pathway is cell wall biogenesis; peptidoglycan biosynthesis. Its function is as follows. Cell wall formation. In Staphylococcus aureus (strain JH9), this protein is UDP-N-acetylmuramate--L-alanine ligase.